Consider the following 146-residue polypeptide: Protein mago nashi homolog (146 aa).

Met-1 carries the post-translational modification N-acetylmethionine.

This sequence belongs to the mago nashi family. In terms of assembly, heterodimer with RBM8A. Core component of the mRNA splicing-dependent exon junction complex (EJC); the core complex contains CASC3, EIF4A3, MAGOH or MAGOHB, and RBM8A. Component of the ALYREF/THOC4-EJC-RNA complex; in the complex interacts with EIF4A3, RBM8A and THOC4 (via the RRM domain); these interactions are likely specific to RNA-bound EJC. Interacts with PYM1; the interaction is direct and dissociates the EJC from spliced mRNAs. Identified in a complex composed of the EJC core, UPF3B and UPF2. The EJC core can also interact with UPF3A (in vitro). Identified in the spliceosome C complex. In terms of tissue distribution, ubiquitous.

Its subcellular location is the nucleus. The protein resides in the nucleus speckle. It localises to the cytoplasm. Its function is as follows. Required for pre-mRNA splicing as component of the spliceosome. Plays a redundant role with MAGOHB as core component of the exon junction complex (EJC) and in the nonsense-mediated decay (NMD) pathway. The EJC is a dynamic structure consisting of core proteins and several peripheral nuclear and cytoplasmic associated factors that join the complex only transiently either during EJC assembly or during subsequent mRNA metabolism. The EJC marks the position of the exon-exon junction in the mature mRNA for the gene expression machinery and the core components remain bound to spliced mRNAs throughout all stages of mRNA metabolism thereby influencing downstream processes including nuclear mRNA export, subcellular mRNA localization, translation efficiency and nonsense-mediated mRNA decay (NMD). The MAGOH-RBM8A heterodimer inhibits the ATPase activity of EIF4A3, thereby trapping the ATP-bound EJC core onto spliced mRNA in a stable conformation. The MAGOH-RBM8A heterodimer interacts with the EJC key regulator PYM1 leading to EJC disassembly in the cytoplasm and translation enhancement of EJC-bearing spliced mRNAs by recruiting them to the ribosomal 48S pre-initiation complex. Involved in the splicing modulation of BCL2L1/Bcl-X (and probably other apoptotic genes); specifically inhibits formation of proapoptotic isoforms such as Bcl-X(S); the function is different from the established EJC assembly. This is Protein mago nashi homolog (MAGOH) from Homo sapiens (Human).